Reading from the N-terminus, the 481-residue chain is Protein nucleotidyltransferase YdiU (481 aa).

Residues G85, G87, R88, K108, D120, G121, R172, and R179 each coordinate ATP. D248 acts as the Proton acceptor in catalysis. Mg(2+) is bound by residues N249 and D258. An ATP-binding site is contributed by D258.

It belongs to the SELO family. Mg(2+) serves as cofactor. The cofactor is Mn(2+).

The catalysed reaction is L-seryl-[protein] + ATP = 3-O-(5'-adenylyl)-L-seryl-[protein] + diphosphate. The enzyme catalyses L-threonyl-[protein] + ATP = 3-O-(5'-adenylyl)-L-threonyl-[protein] + diphosphate. It carries out the reaction L-tyrosyl-[protein] + ATP = O-(5'-adenylyl)-L-tyrosyl-[protein] + diphosphate. It catalyses the reaction L-histidyl-[protein] + UTP = N(tele)-(5'-uridylyl)-L-histidyl-[protein] + diphosphate. The catalysed reaction is L-seryl-[protein] + UTP = O-(5'-uridylyl)-L-seryl-[protein] + diphosphate. The enzyme catalyses L-tyrosyl-[protein] + UTP = O-(5'-uridylyl)-L-tyrosyl-[protein] + diphosphate. Its function is as follows. Nucleotidyltransferase involved in the post-translational modification of proteins. It can catalyze the addition of adenosine monophosphate (AMP) or uridine monophosphate (UMP) to a protein, resulting in modifications known as AMPylation and UMPylation. This is Protein nucleotidyltransferase YdiU from Cereibacter sphaeroides (strain ATCC 17029 / ATH 2.4.9) (Rhodobacter sphaeroides).